Reading from the N-terminus, the 194-residue chain is dCTP deaminase (194 aa).

Residues 110 to 115 (RSSLAR), Asp128, 136 to 138 (VLE), Tyr171, Lys178, and Gln182 contribute to the dCTP site. Glu138 functions as the Proton donor/acceptor in the catalytic mechanism.

Belongs to the dCTP deaminase family. Homotrimer.

It catalyses the reaction dCTP + H2O + H(+) = dUTP + NH4(+). The protein operates within pyrimidine metabolism; dUMP biosynthesis; dUMP from dCTP (dUTP route): step 1/2. Functionally, catalyzes the deamination of dCTP to dUTP. In Glaesserella parasuis serovar 5 (strain SH0165) (Haemophilus parasuis), this protein is dCTP deaminase.